The following is a 1025-amino-acid chain: Leucyl-cystinyl aminopeptidase (1025 aa).

Residue Met1 is modified to N-acetylmethionine. Topologically, residues 1-110 are cytoplasmic; sequence MEPFTNDRLQ…GACSVPSART (110 aa). The Dileucine internalization motif motif lies at 53 to 54; the sequence is LL. Tyr70 is modified (phosphotyrosine). The short motif at 76–77 is the Dileucine internalization motif element; that stretch reads LL. Phosphoserine occurs at positions 80 and 91. The interval 96 to 101 is tankyrase binding; that stretch reads RQSPDG. The helical; Signal-anchor for type II membrane protein transmembrane segment at 111–131 threads the bilayer; it reads MVVCAFVIVVAVSVIMVIYLL. Topologically, residues 132-1025 are extracellular; the sequence is PRCTFTKEGC…KNLKSLTWWL (894 aa). N-linked (GlcNAc...) asparagine glycosylation is found at Asn145, Asn184, Asn215, Asn256, and Asn266. Position 295 (Glu295) interacts with substrate. N-linked (GlcNAc...) asparagine glycans are attached at residues Asn368 and Asn374. 428 to 432 is a binding site for substrate; the sequence is GAMEN. Asn448 carries N-linked (GlcNAc...) asparagine glycosylation. His464 serves as a coordination point for Zn(2+). The Proton acceptor role is filled by Glu465. Positions 468 and 487 each coordinate Zn(2+). 9 N-linked (GlcNAc...) asparagine glycosylation sites follow: Asn525, Asn578, Asn598, Asn664, Asn682, Asn760, Asn834, Asn850, and Asn989.

The protein belongs to the peptidase M1 family. In terms of assembly, homodimer. Binds tankyrases 1 and 2. The cofactor is Zn(2+). In terms of processing, the pregnancy serum form is derived from the membrane-bound form by proteolytic processing. N-glycosylated. In terms of tissue distribution, highly expressed in placenta, heart, kidney and small intestine. Detected at lower levels in neuronal cells in the brain, in skeletal muscle, spleen, liver, testes and colon.

It is found in the cell membrane. The protein resides in the secreted. It carries out the reaction Release of an N-terminal amino acid, Cys-|-Xaa-, in which the half-cystine residue is involved in a disulfide loop, notably in oxytocin or vasopressin. Hydrolysis rates on a range of aminoacyl arylamides exceed that for the cystinyl derivative, however.. In terms of biological role, release of an N-terminal amino acid, cleaves before cysteine, leucine as well as other amino acids. Degrades peptide hormones such as oxytocin, vasopressin and angiotensin III, and plays a role in maintaining homeostasis during pregnancy. May be involved in the inactivation of neuronal peptides in the brain. Cleaves Met-enkephalin and dynorphin. Binds angiotensin IV and may be the angiotensin IV receptor in the brain. The sequence is that of Leucyl-cystinyl aminopeptidase (LNPEP) from Homo sapiens (Human).